A 287-amino-acid chain; its full sequence is Urease accessory protein UreD (287 aa).

Belongs to the UreD family. UreD, UreF and UreG form a complex that acts as a GTP-hydrolysis-dependent molecular chaperone, activating the urease apoprotein by helping to assemble the nickel containing metallocenter of UreC. The UreE protein probably delivers the nickel.

It is found in the cytoplasm. In terms of biological role, required for maturation of urease via the functional incorporation of the urease nickel metallocenter. The sequence is that of Urease accessory protein UreD from Ureaplasma parvum serovar 3 (strain ATCC 27815 / 27 / NCTC 11736).